The sequence spans 732 residues: Inducible ornithine decarboxylase (732 aa).

Lysine 355 carries the N6-(pyridoxal phosphate)lysine modification.

It belongs to the Orn/Lys/Arg decarboxylase class-I family. Pyridoxal 5'-phosphate serves as cofactor.

The enzyme catalyses L-ornithine + H(+) = putrescine + CO2. It functions in the pathway amine and polyamine biosynthesis; putrescine biosynthesis via L-ornithine pathway; putrescine from L-ornithine: step 1/1. In terms of biological role, the first enzyme leading to putrescine and thus polyamine synthesis. This chain is Inducible ornithine decarboxylase, found in Escherichia coli (strain K12).